Here is a 277-residue protein sequence, read N- to C-terminus: Small ribosomal subunit protein mS23 (277 aa).

2 disordered regions span residues 48–85 (APSH…KKPS) and 232–277 (LAAF…GPPI). Over residues 244-269 (ESGESEDEIPLIEEEDAIGASEESET) the composition is skewed to acidic residues.

Belongs to the mitochondrion-specific ribosomal protein mS23 family. As to quaternary structure, component of the mitochondrial small ribosomal subunit.

It is found in the mitochondrion. In Ajellomyces capsulatus (strain NAm1 / WU24) (Darling's disease fungus), this protein is Small ribosomal subunit protein mS23 (RSM25).